We begin with the raw amino-acid sequence, 78 residues long: Conotoxin TsMSGL-13 (78 aa).

Residues 1–24 (MSGLGIMVLTLLLFMFMATSHQDA) form the signal peptide. A propeptide spanning residues 25-44 (GEKQATQRDAINVRRRRSIT) is cleaved from the precursor. 3 disulfide bridges follow: C51/C63, C55/C72, and C62/C76. F77 bears the Phenylalanine amide mark.

It belongs to the conotoxin O3 superfamily. In terms of tissue distribution, expressed by the venom duct.

The protein resides in the secreted. The protein is Conotoxin TsMSGL-13 of Conus tessulatus (Tessellate cone).